The chain runs to 347 residues: Mitochondrial carrier protein rim2 (347 aa).

3 Solcar repeats span residues 32 to 136 (PPPL…GKRI), 146 to 234 (ENSQ…FKHA), and 256 to 345 (LDWG…IMHF). The next 6 helical transmembrane spans lie at 38–58 (FIAG…LDVV), 105–125 (TRAL…ARSI), 152–172 (LMAA…IWLV), 214–233 (SLLG…KFKH), 262–282 (LGGA…HEVV), and 317–338 (LYGG…LFGS).

It is found in the mitochondrion inner membrane. The catalysed reaction is 5-methyl-UTP(out) + UTP(in) = 5-methyl-UTP(in) + UTP(out). In terms of biological role, mitochondrial transporter that imports/exports pyrimidine nucleotides into and from mitochondria. Selectively transports uridine, thymidine, and cytosine (deoxy)nucleoside di- and triphosphates by an antiport mechanism. Also transports, with lower efficiency, uridine, thymidine, and cytosine (deoxy)nucleoside monophosphates as well as guanosine (deoxy)nucleoside di- and triphosphate. May import (deoxy)nucleoside triphosphates in exchange for intramitochondrial (deoxy)nucleoside monophosphates, thus providing precursors necessary for de novo synthesis of mitochondrial DNA and RNA while exporting products of their catabolism. Mediates the transport of iron and other divalent metal ions like copper and zinc across the mitochondrial inner membrane in a pyrimidine nucleotide-dependent fashion. Catalyzes the co-import of pyrimidine nucleotides and divalent metal ions including ferrous iron. Participates in mitochondrial genome maintenance, regulation of mitochondrial membrane potential and mitochondrial respiration. The chain is Mitochondrial carrier protein rim2 (rim2) from Schizosaccharomyces pombe (strain 972 / ATCC 24843) (Fission yeast).